A 147-amino-acid chain; its full sequence is Deoxyuridine 5'-triphosphate nucleotidohydrolase (147 aa).

Substrate contacts are provided by residues 67–69 (RSG), Asn-80, and 84–86 (TID).

It belongs to the dUTPase family. Mg(2+) serves as cofactor.

The enzyme catalyses dUTP + H2O = dUMP + diphosphate + H(+). Its pathway is pyrimidine metabolism; dUMP biosynthesis; dUMP from dCTP (dUTP route): step 2/2. In terms of biological role, this enzyme is involved in nucleotide metabolism: it produces dUMP, the immediate precursor of thymidine nucleotides and it decreases the intracellular concentration of dUTP so that uracil cannot be incorporated into DNA. In Anaplasma marginale (strain St. Maries), this protein is Deoxyuridine 5'-triphosphate nucleotidohydrolase.